The following is a 179-amino-acid chain: uncharacterized protein (179 aa).

This is an uncharacterized protein from Pasteurella multocida (strain Pm70).